The following is a 76-amino-acid chain: Pigment-dispersing hormone A peptides (76 aa).

The N-terminal stretch at 1–20 is a signal peptide; that stretch reads MRSAMVVLVLVAMVAVFTRA. A73 is subject to Alanine amide.

This sequence belongs to the arthropod PDH family. As to expression, optical ganglia of the eyestalk.

It localises to the secreted. In terms of biological role, the pigment-dispersing hormone causes the migration of the distal retinal pigment into the proximal end of the pigment chromatophore cells and thus decreases the amount of light entering the retinulas. May also function as a neurotransmitter and/or neuromodulator. In Faxonius limosus (Spinycheek crayfish), this protein is Pigment-dispersing hormone A peptides.